A 361-amino-acid chain; its full sequence is 3-dehydroquinate synthase (361 aa).

The protein belongs to the archaeal-type DHQ synthase family.

It carries out the reaction 2-amino-2,3,7-trideoxy-D-lyxo-hept-6-ulosonate + NAD(+) + H2O = 3-dehydroquinate + NH4(+) + NADH + H(+). Its function is as follows. Catalyzes the oxidative deamination and cyclization of 2-amino-3,7-dideoxy-D-threo-hept-6-ulosonic acid (ADH) to yield 3-dehydroquinate (DHQ), which is fed into the canonical shikimic pathway of aromatic amino acid biosynthesis. This is 3-dehydroquinate synthase from Methanococcus maripaludis (strain DSM 14266 / JCM 13030 / NBRC 101832 / S2 / LL).